The chain runs to 251 residues: Malonyl-[acyl-carrier protein] O-methyltransferase (251 aa).

It belongs to the methyltransferase superfamily.

It catalyses the reaction malonyl-[ACP] + S-adenosyl-L-methionine = malonyl-[ACP] methyl ester + S-adenosyl-L-homocysteine. It functions in the pathway cofactor biosynthesis; biotin biosynthesis. Its function is as follows. Converts the free carboxyl group of a malonyl-thioester to its methyl ester by transfer of a methyl group from S-adenosyl-L-methionine (SAM). It allows to synthesize pimeloyl-ACP via the fatty acid synthetic pathway. The chain is Malonyl-[acyl-carrier protein] O-methyltransferase from Pseudescherichia vulneris (Escherichia vulneris).